Here is a 785-residue protein sequence, read N- to C-terminus: Endonuclease MutS2 (785 aa).

Residue 335–342 participates in ATP binding; the sequence is GPNTGGKT. Residues 710-785 form the Smr domain; that stretch reads LDLRGERYED…GNGVTIVEFK (76 aa).

It belongs to the DNA mismatch repair MutS family. MutS2 subfamily. Homodimer. Binds to stalled ribosomes, contacting rRNA.

Functionally, endonuclease that is involved in the suppression of homologous recombination and thus may have a key role in the control of bacterial genetic diversity. Acts as a ribosome collision sensor, splitting the ribosome into its 2 subunits. Detects stalled/collided 70S ribosomes which it binds and splits by an ATP-hydrolysis driven conformational change. Acts upstream of the ribosome quality control system (RQC), a ribosome-associated complex that mediates the extraction of incompletely synthesized nascent chains from stalled ribosomes and their subsequent degradation. Probably generates substrates for RQC. The polypeptide is Endonuclease MutS2 (Listeria welshimeri serovar 6b (strain ATCC 35897 / DSM 20650 / CCUG 15529 / CIP 8149 / NCTC 11857 / SLCC 5334 / V8)).